We begin with the raw amino-acid sequence, 865 residues long: Xylosyltransferase 2 (865 aa).

Over 1-15 (MVASARVQKLVRRYK) the chain is Cytoplasmic. A helical; Signal-anchor for type II membrane protein membrane pass occupies residues 16–36 (LAIATALAILLLQGLVVWSFS). Residues 37–865 (GLEEDEAGEK…GPVKADGRLR (829 aa)) lie on the Lumenal side of the membrane. Residues 41–157 (DEAGEKGRQR…EGAPQPTDNG (117 aa)) form a disordered region. Residues 53–65 (RPLDPGEGSKDTD) are compositionally biased toward basic and acidic residues. The span at 73–82 (STGRRHGRWR) shows a compositional bias: basic residues. N-linked (GlcNAc...) asparagine glycosylation is present at asparagine 122. The span at 125 to 137 (GAAAGEALVGAAG) shows a compositional bias: low complexity. 4 cysteine pairs are disulfide-bonded: cysteine 162-cysteine 190, cysteine 206-cysteine 448, cysteine 467-cysteine 480, and cysteine 469-cysteine 478. UDP-alpha-D-xylose is bound by residues valine 239, aspartate 267, and 296 to 298 (TIW). Asparagine 327 carries an N-linked (GlcNAc...) asparagine glycan. 400–401 (DW) is a binding site for UDP-alpha-D-xylose. Residues serine 481 and 504-505 (RK) each bind UDP-alpha-D-xylose. Cystine bridges form between cysteine 581–cysteine 833 and cysteine 826–cysteine 839. Asparagine 683 is a glycosylation site (N-linked (GlcNAc...) asparagine). The interval 846 to 865 (SLSPDPKSELGPVKADGRLR) is disordered.

The protein belongs to the glycosyltransferase 14 family. XylT subfamily. Monomer. The cofactor is Mg(2+). Mn(2+) is required as a cofactor. In terms of processing, contains disulfide bonds.

The protein resides in the golgi apparatus membrane. Its subcellular location is the secreted. It carries out the reaction UDP-alpha-D-xylose + L-seryl-[protein] = 3-O-(beta-D-xylosyl)-L-seryl-[protein] + UDP + H(+). It participates in glycan metabolism; chondroitin sulfate biosynthesis. Its pathway is glycan metabolism; heparan sulfate biosynthesis. In terms of biological role, catalyzes the first step in the biosynthesis of chondroitin sulfate, heparan sulfate and dermatan sulfate proteoglycans, such as DCN. Transfers D-xylose from UDP-D-xylose to specific serine residues of the core protein. The protein is Xylosyltransferase 2 (XYLT2) of Pan troglodytes (Chimpanzee).